The chain runs to 212 residues: ATP phosphoribosyltransferase (212 aa).

This sequence belongs to the ATP phosphoribosyltransferase family. Short subfamily. As to quaternary structure, heteromultimer composed of HisG and HisZ subunits.

It localises to the cytoplasm. It carries out the reaction 1-(5-phospho-beta-D-ribosyl)-ATP + diphosphate = 5-phospho-alpha-D-ribose 1-diphosphate + ATP. It participates in amino-acid biosynthesis; L-histidine biosynthesis; L-histidine from 5-phospho-alpha-D-ribose 1-diphosphate: step 1/9. Functionally, catalyzes the condensation of ATP and 5-phosphoribose 1-diphosphate to form N'-(5'-phosphoribosyl)-ATP (PR-ATP). Has a crucial role in the pathway because the rate of histidine biosynthesis seems to be controlled primarily by regulation of HisG enzymatic activity. This is ATP phosphoribosyltransferase from Prochlorococcus marinus (strain MIT 9515).